Consider the following 361-residue polypeptide: Mitogen-activated protein kinase 14A (361 aa).

A Protein kinase domain is found at 25–309; sequence YQNLSPVGSG…AAEALAHPYF (285 aa). ATP contacts are provided by residues 31–39 and lysine 54; that span reads VGSGAYGSV. Aspartate 169 acts as the Proton acceptor in catalysis. A Phosphothreonine; by MAP2K3 modification is found at threonine 181. Residues 181–183 carry the TXY motif; sequence TGY. Tyrosine 183 carries the post-translational modification Phosphotyrosine; by MAP2K3.

It belongs to the protein kinase superfamily. CMGC Ser/Thr protein kinase family. MAP kinase subfamily. Requires Mg(2+) as cofactor. Post-translationally, dually phosphorylated on Thr-181 and Tyr-183, which activates the enzyme.

The protein localises to the cytoplasm. Its subcellular location is the nucleus. The enzyme catalyses L-seryl-[protein] + ATP = O-phospho-L-seryl-[protein] + ADP + H(+). The catalysed reaction is L-threonyl-[protein] + ATP = O-phospho-L-threonyl-[protein] + ADP + H(+). Activated by threonine and tyrosine phosphorylation by the dual specificity kinase, MKK3. In terms of biological role, serine/threonine kinase which acts as an essential component of the MAP kinase signal transduction pathway. Mapk14a is one of the four p38 MAPKs which play an important role in the cascades of cellular responses evoked by extracellular stimuli such as pro-inflammatory cytokines or physical stress leading to direct activation of transcription factors. Accordingly, p38 MAPKs phosphorylate a broad range of proteins and it has been estimated that they may have approximately 200 to 300 substrates each. Some of the targets are downstream kinases which are activated through phosphorylation and further phosphorylate additional targets. Required for cytokinesis on the future dorsal side of the blastodisc, suggesting a role in symmetrical and synchronous blastomere cleavage. The polypeptide is Mitogen-activated protein kinase 14A (mapk14a) (Danio rerio (Zebrafish)).